The sequence spans 235 residues: dITP/XTP pyrophosphatase (235 aa).

Residue 7-12 (STNPGK) participates in substrate binding. The active-site Proton acceptor is D70. Mg(2+) is bound at residue D70. Substrate is bound by residues S71, 180-183 (FGYD), K211, and 216-217 (HR).

The protein belongs to the HAM1 NTPase family. As to quaternary structure, homodimer. Mg(2+) serves as cofactor.

The enzyme catalyses XTP + H2O = XMP + diphosphate + H(+). It catalyses the reaction dITP + H2O = dIMP + diphosphate + H(+). The catalysed reaction is ITP + H2O = IMP + diphosphate + H(+). Pyrophosphatase that catalyzes the hydrolysis of nucleoside triphosphates to their monophosphate derivatives, with a high preference for the non-canonical purine nucleotides XTP (xanthosine triphosphate), dITP (deoxyinosine triphosphate) and ITP. Seems to function as a house-cleaning enzyme that removes non-canonical purine nucleotides from the nucleotide pool, thus preventing their incorporation into DNA/RNA and avoiding chromosomal lesions. The sequence is that of dITP/XTP pyrophosphatase from Anaeromyxobacter dehalogenans (strain 2CP-C).